The chain runs to 536 residues: Xylulose kinase (536 aa).

His-99, Arg-170, Asp-280, and Asn-281 together coordinate substrate. Residues Trp-355, 441–442, and Asn-445 each bind ATP; that span reads GA.

It belongs to the FGGY kinase family. In terms of assembly, monomer.

The catalysed reaction is D-xylulose + ATP = D-xylulose 5-phosphate + ADP + H(+). Its function is as follows. Phosphorylates D-xylulose to produce D-xylulose 5-phosphate, a molecule that may play an important role in the regulation of glucose metabolism and lipogenesis. The protein is Xylulose kinase (Xylb) of Rattus norvegicus (Rat).